A 173-amino-acid polypeptide reads, in one-letter code: Shikimate kinase 1 (173 aa).

14–19 (GAGKST) is a binding site for ATP. Serine 18 provides a ligand contact to Mg(2+). 3 residues coordinate substrate: aspartate 36, arginine 60, and glycine 82. Position 120 (arginine 120) interacts with ATP. Arginine 140 serves as a coordination point for substrate. Glutamine 157 contacts ATP.

It belongs to the shikimate kinase family. In terms of assembly, monomer. The cofactor is Mg(2+).

It is found in the cytoplasm. It catalyses the reaction shikimate + ATP = 3-phosphoshikimate + ADP + H(+). Its pathway is metabolic intermediate biosynthesis; chorismate biosynthesis; chorismate from D-erythrose 4-phosphate and phosphoenolpyruvate: step 5/7. Functionally, catalyzes the specific phosphorylation of the 3-hydroxyl group of shikimic acid using ATP as a cosubstrate. In Erwinia tasmaniensis (strain DSM 17950 / CFBP 7177 / CIP 109463 / NCPPB 4357 / Et1/99), this protein is Shikimate kinase 1.